The sequence spans 179 residues: Serglycin (179 aa).

The N-terminal stretch at 1-26 (MRQVPVGTRLVLALAFVLVWGSSVQG) is a signal peptide. Positions 27–75 (YPARRARYQWVRCKPDGIFANCIEEKGPRFDLIAEESNVGPPMTDPVLM) are cleaved as a propeptide — activation peptide. Residues cysteine 39 and cysteine 48 are joined by a disulfide bond. Positions 86–145 (SDDYSGSGSGSGSGSGSGSGSGSGSGSGSGSGSGSGSGSGSGSGSGSGSGSGSLADMEWE) are disordered. O-linked (Xyl...) (glycosaminoglycan) serine glycans are attached at residues serine 90 and serine 92. 24 consecutive repeat copies span residues 90–91 (SG), 92–93 (SG), 94–95 (SG), 96–97 (SG), 98–99 (SG), 100–101 (SG), 102–103 (SG), 104–105 (SG), 106–107 (SG), 108–109 (SG), 110–111 (SG), 112–113 (SG), 114–115 (SG), 116–117 (SG), 118–119 (SG), 120–121 (SG), 122–123 (SG), 124–125 (SG), 126–127 (SG), 128–129 (SG), 130–131 (SG), 132–133 (SG), 134–135 (SG), and 136–137 (SG). Residues 90 to 137 (SGSGSGSGSGSGSGSGSGSGSGSGSGSGSGSGSGSGSGSGSGSGSGSG) are 24 X 2 AA tandem repeats of S-G. Over residues 92 to 136 (SGSGSGSGSGSGSGSGSGSGSGSGSGSGSGSGSGSGSGSGSGSGS) the composition is skewed to gly residues. Serine 96, serine 98, serine 100, serine 102, serine 104, and serine 106 each carry an O-linked (Xyl...) (glycosaminoglycan) serine glycan.

The protein belongs to the serglycin family. Binds to activated CD44 and to GZMB. O-glycosylated; contains chondroitin sulfate and heparan sulfate.

It localises to the cytoplasmic granule. The protein localises to the cytolytic granule. The protein resides in the secreted. Its subcellular location is the extracellular space. It is found in the golgi apparatus. Plays a role in formation of mast cell secretory granules and mediates storage of various compounds in secretory vesicles. Required for storage of some proteases in both connective tissue and mucosal mast cells and for storage of granzyme B in T-lymphocytes. Plays a role in localizing neutrophil elastase in azurophil granules of neutrophils. Mediates processing of MMP2. Plays a role in cytotoxic cell granule-mediated apoptosis by forming a complex with granzyme B which is delivered to cells by perforin to induce apoptosis. Regulates the secretion of TNF-alpha and may also regulate protease secretion. Inhibits bone mineralization. The chain is Serglycin (Srgn) from Rattus norvegicus (Rat).